A 411-amino-acid polypeptide reads, in one-letter code: Imidazolonepropionase (411 aa).

2 residues coordinate Fe(3+): histidine 75 and histidine 77. The Zn(2+) site is built by histidine 75 and histidine 77. Residues arginine 84, tyrosine 147, and histidine 180 each coordinate 4-imidazolone-5-propanoate. Tyrosine 147 contacts N-formimidoyl-L-glutamate. Histidine 245 serves as a coordination point for Fe(3+). Position 245 (histidine 245) interacts with Zn(2+). Glutamine 248 provides a ligand contact to 4-imidazolone-5-propanoate. Aspartate 320 contacts Fe(3+). Aspartate 320 contributes to the Zn(2+) binding site. The N-formimidoyl-L-glutamate site is built by asparagine 322 and glycine 324. Threonine 325 is a 4-imidazolone-5-propanoate binding site.

This sequence belongs to the metallo-dependent hydrolases superfamily. HutI family. Requires Zn(2+) as cofactor. Fe(3+) serves as cofactor.

The protein localises to the cytoplasm. The enzyme catalyses 4-imidazolone-5-propanoate + H2O = N-formimidoyl-L-glutamate. It participates in amino-acid degradation; L-histidine degradation into L-glutamate; N-formimidoyl-L-glutamate from L-histidine: step 3/3. Its function is as follows. Catalyzes the hydrolytic cleavage of the carbon-nitrogen bond in imidazolone-5-propanoate to yield N-formimidoyl-L-glutamate. It is the third step in the universal histidine degradation pathway. The sequence is that of Imidazolonepropionase from Photobacterium profundum (strain SS9).